We begin with the raw amino-acid sequence, 377 residues long: tRNA(Met) cytidine acetate ligase (377 aa).

Residues 7–20, Gly-100, Asn-153, and Arg-178 contribute to the ATP site; that span reads ITEY…HLFH.

It belongs to the TmcAL family.

It localises to the cytoplasm. The enzyme catalyses cytidine(34) in elongator tRNA(Met) + acetate + ATP = N(4)-acetylcytidine(34) in elongator tRNA(Met) + AMP + diphosphate. In terms of biological role, catalyzes the formation of N(4)-acetylcytidine (ac(4)C) at the wobble position of elongator tRNA(Met), using acetate and ATP as substrates. First activates an acetate ion to form acetyladenylate (Ac-AMP) and then transfers the acetyl group to tRNA to form ac(4)C34. This Staphylococcus epidermidis (strain ATCC 35984 / DSM 28319 / BCRC 17069 / CCUG 31568 / BM 3577 / RP62A) protein is tRNA(Met) cytidine acetate ligase.